The following is a 467-amino-acid chain: UDP-N-acetylmuramate--L-alanine ligase (467 aa).

An ATP-binding site is contributed by 114 to 120; sequence GTHGKTT.

This sequence belongs to the MurCDEF family.

It is found in the cytoplasm. It catalyses the reaction UDP-N-acetyl-alpha-D-muramate + L-alanine + ATP = UDP-N-acetyl-alpha-D-muramoyl-L-alanine + ADP + phosphate + H(+). Its pathway is cell wall biogenesis; peptidoglycan biosynthesis. Its function is as follows. Cell wall formation. The protein is UDP-N-acetylmuramate--L-alanine ligase of Rhodopseudomonas palustris (strain BisA53).